Here is a 129-residue protein sequence, read N- to C-terminus: Lysozyme C (129 aa).

The C-type lysozyme domain maps to 1-129 (KVYGRCELAA…VNAWTRGCRL (129 aa)). 4 cysteine pairs are disulfide-bonded: cysteine 6-cysteine 127, cysteine 30-cysteine 115, cysteine 64-cysteine 80, and cysteine 76-cysteine 94. Residues glutamate 35 and aspartate 52 contribute to the active site.

It belongs to the glycosyl hydrolase 22 family. Monomer.

Its subcellular location is the secreted. It catalyses the reaction Hydrolysis of (1-&gt;4)-beta-linkages between N-acetylmuramic acid and N-acetyl-D-glucosamine residues in a peptidoglycan and between N-acetyl-D-glucosamine residues in chitodextrins.. Its function is as follows. Lysozymes have primarily a bacteriolytic function; those in tissues and body fluids are associated with the monocyte-macrophage system and enhance the activity of immunoagents. The chain is Lysozyme C (LYZ) from Syrmaticus soemmerringii (Copper pheasant).